The primary structure comprises 170 residues: AP-5 complex subunit sigma-1 (170 aa).

Probably part of the adaptor protein complex 5 (AP-5) a tetramer composed of AP5B1, AP5M1, AP5S1 and AP5Z1. Interacts with ZFYVE26 and SPG11.

It localises to the cytoplasm. The protein localises to the cytosol. It is found in the late endosome membrane. The protein resides in the lysosome membrane. In terms of biological role, as part of AP-5, a probable fifth adaptor protein complex it may be involved in endosomal transport. The chain is AP-5 complex subunit sigma-1 (Ap5s1) from Mus musculus (Mouse).